A 1358-amino-acid chain; its full sequence is DNA-directed RNA polymerase subunit beta (1358 aa).

Belongs to the RNA polymerase beta chain family. The RNAP catalytic core consists of 2 alpha, 1 beta, 1 beta' and 1 omega subunit. When a sigma factor is associated with the core the holoenzyme is formed, which can initiate transcription.

It carries out the reaction RNA(n) + a ribonucleoside 5'-triphosphate = RNA(n+1) + diphosphate. In terms of biological role, DNA-dependent RNA polymerase catalyzes the transcription of DNA into RNA using the four ribonucleoside triphosphates as substrates. This Francisella tularensis subsp. holarctica (strain LVS) protein is DNA-directed RNA polymerase subunit beta.